Here is a 469-residue protein sequence, read N- to C-terminus: MQVTETLNEGLKREIKIVVPARNLEEKLNERLDNTKDKIKLNGFRPGKVPAGYLRKMYGKSFMAEILNEIVSDASRSILAERGERSAMQPKIDVEEDKKILDGKADFIFSLKYEVLPKFEIKDFEHIEIIREIAVIPEQEIDDQVKRVLSSACNYSLKDGPSEEGDRVTIDYIGKLEGVPFEGGAESDAQLILGSKQFIPGFEEQLVGVKAGDMKTISVKFPDNYSAVHLAGKNAEFDITVKAVCKSDELKIDDEAAQKVGLESLERLREVVRGQIESQYGSMTRQKIKRQILDALDADYNFEIPEGLLEIEFNNIWAQVNDDLKKAGRSFEDEGVTEEQAREEYRVLAQRRVRLGLVLSEIGMNIGVKVSEDELKAAVFDQVRQYPGQEKEIMDFFRNTPEAVANLRAPIFEEKVIDHLLARIKVTDKEVTVEELMKEYDETDLTEKKPLKKKTAEKVSTKKKAPKKS.

The region spanning 165–250 is the PPIase FKBP-type domain; the sequence is GDRVTIDYIG…VKAVCKSDEL (86 aa). A compositionally biased stretch (basic and acidic residues) spans 444-460; that stretch reads DLTEKKPLKKKTAEKVS. The segment at 444–469 is disordered; that stretch reads DLTEKKPLKKKTAEKVSTKKKAPKKS.

Belongs to the FKBP-type PPIase family. Tig subfamily.

The protein resides in the cytoplasm. It carries out the reaction [protein]-peptidylproline (omega=180) = [protein]-peptidylproline (omega=0). Its function is as follows. Involved in protein export. Acts as a chaperone by maintaining the newly synthesized protein in an open conformation. Functions as a peptidyl-prolyl cis-trans isomerase. The protein is Trigger factor of Bartonella henselae (strain ATCC 49882 / DSM 28221 / CCUG 30454 / Houston 1) (Rochalimaea henselae).